The sequence spans 316 residues: RNA interference defective protein 11 (316 aa).

The segment at 183–218 adopts an RING-type; degenerate zinc-finger fold; that stretch reads CYINFNCQTSKVMFGCGHVYCEQCLNSWNDKPCSVC.

In terms of assembly, interacts (via RING-type zinc finger domain) with rde-10.

Functionally, in complex with rde-10, required in the endogenous and exogenous siRNA pathway for biogenesis and accumulation of secondary small interfering RNA (siRNA) intermediates, such as 22G-siRNAs derived from ergo-1 targets. In Caenorhabditis elegans, this protein is RNA interference defective protein 11.